A 60-amino-acid polypeptide reads, in one-letter code: Homeobox protein EgHBX4 (60 aa).

Residues 1-60 (SRRERTIYTPEQLEAMEEVFGVNRYPDVSMREELASRLGINESKIQVWFKNRRAKLRNLE) constitute a DNA-binding region (homeobox).

The protein belongs to the paired homeobox family. Bicoid subfamily.

Its subcellular location is the nucleus. This is Homeobox protein EgHBX4 (HBX4) from Echinococcus granulosus (Hydatid tapeworm).